Consider the following 272-residue polypeptide: Pyrroline-5-carboxylate reductase (272 aa).

It belongs to the pyrroline-5-carboxylate reductase family.

Its subcellular location is the cytoplasm. It catalyses the reaction L-proline + NADP(+) = (S)-1-pyrroline-5-carboxylate + NADPH + 2 H(+). The enzyme catalyses L-proline + NAD(+) = (S)-1-pyrroline-5-carboxylate + NADH + 2 H(+). It participates in amino-acid biosynthesis; L-proline biosynthesis; L-proline from L-glutamate 5-semialdehyde: step 1/1. Functionally, catalyzes the reduction of 1-pyrroline-5-carboxylate (PCA) to L-proline. This chain is Pyrroline-5-carboxylate reductase, found in Vibrio alginolyticus.